Here is a 445-residue protein sequence, read N- to C-terminus: CBL-interacting serine/threonine-protein kinase 8 (445 aa).

The region spanning 9–262 (YELGRTIGEG…IAEIRKDEWF (254 aa)) is the Protein kinase domain. Residues 15-23 (IGEGTFAKV) and Lys38 contribute to the ATP site. The Proton acceptor role is filled by Asp132. The activation loop stretch occupies residues 150–177 (DFGLSALPEQGVTILKTTCGTPNYVAPE). At Ser154 the chain carries Phosphoserine. Thr166 carries the phosphothreonine modification. In terms of domain architecture, NAF spans 302 to 326 (TGPLTLNAFDLIILSQGLNLATLFD). The tract at residues 333-362 (KHQTRFISHKPANVVLSSMEVVSQSMGFKT) is PPI.

This sequence belongs to the protein kinase superfamily. CAMK Ser/Thr protein kinase family. SNF1 subfamily. In terms of assembly, interacts with CBL1 and CBL9. Mn(2+) is required as a cofactor. In terms of tissue distribution, mostly expressed in roots, and, to a lower extent, in leaves, stems, flowers, and siliques.

It carries out the reaction L-seryl-[protein] + ATP = O-phospho-L-seryl-[protein] + ADP + H(+). The enzyme catalyses L-threonyl-[protein] + ATP = O-phospho-L-threonyl-[protein] + ADP + H(+). CIPK serine-threonine protein kinases interact with CBL proteins. Binding of a CBL protein to the regulatory NAF domain of CIPK protein lead to the activation of the kinase in a calcium-dependent manner. This is CBL-interacting serine/threonine-protein kinase 8 (CIPK8) from Arabidopsis thaliana (Mouse-ear cress).